We begin with the raw amino-acid sequence, 586 residues long: Old nuclease (586 aa).

The tract at residues 1 to 163 (MTVRLASVSI…VEDSTKCKNT (163 aa)) is ATPase domain N-terminus. 34–38 (NAGKS) serves as a coordination point for ATP. The tract at residues 164-270 (TTIGKILSAI…SRFGHGTQRS (107 aa)) is dimerization domain. The segment at 271 to 390 (IQMALIQYLA…TLSNSSYLLF (120 aa)) is ATPase domain C-terminus. The toprim domain stretch occupies residues 393 to 586 (EVLLVEGKTE…DEMEDFIKWI (194 aa)). Residues glutamate 398, glutamate 402, aspartate 453, aspartate 455, aspartate 541, and glutamate 543 each contribute to the a divalent metal cation site. The active-site Stabilizes transition state or protonates leaving group is arginine 570.

This sequence belongs to the class 1 OLD nuclease family. The cofactor is Mg(2+).

The enzyme catalyses Exonucleolytic cleavage in the 5'- to 3'-direction to yield nucleoside 5'-phosphates.. An exonuclease that acts preferentially on linear dsDNA, processively degrading it from 5'-3', releasing 5'-phosphomononucleotides. Initiates on 5'-phosphate and 5'-hydroxyl ends. Also acts on linear ssDNA, nicked DNA and RNA. ATP enhances but is not necessary for exonuclease activity; has ATPase activity that is not stimulated by DNA. The old protein kills E.coli recB and recC mutants and interferes with phage lambda growth. Both the exonuclease and ATPase activities are required in vivo. Probably interferes with lambda phage by degrading its linear DNA. Isolated as a mutant able to lysogenize E.coli strain C cells normally not susceptible to lysis by phage P2. In Enterobacteriaceae (Bacteriophage P2), this protein is Old nuclease.